A 140-amino-acid polypeptide reads, in one-letter code: Large ribosomal subunit protein uL11 (140 aa).

This sequence belongs to the universal ribosomal protein uL11 family. As to quaternary structure, part of the ribosomal stalk of the 50S ribosomal subunit. Interacts with L10 and the large rRNA to form the base of the stalk. L10 forms an elongated spine to which L12 dimers bind in a sequential fashion forming a multimeric L10(L12)X complex. Post-translationally, one or more lysine residues are methylated.

Functionally, forms part of the ribosomal stalk which helps the ribosome interact with GTP-bound translation factors. The polypeptide is Large ribosomal subunit protein uL11 (Brachyspira hyodysenteriae (strain ATCC 49526 / WA1)).